A 125-amino-acid polypeptide reads, in one-letter code: Casein kinase I isoform alpha (125 aa).

The Protein kinase domain occupies 1–125; the sequence is GEEVAVKLES…LIDFGLAKKY (125 aa). Lysine 7 is an ATP binding site. Aspartate 97 serves as the catalytic Proton acceptor.

Belongs to the protein kinase superfamily. CK1 Ser/Thr protein kinase family. Casein kinase I subfamily. In terms of assembly, interacts with the Axin complex. Interacts with TUT1, leading to TUT1 phosphorylation. Interacts with FAM83A, FAM83B, FAM83C, FAM83D, FAM83E, FAM83F, FAM83G and FAM83H (via DUF1669). Interaction with FAM83H recruits CSNK1A1 to keratin filaments. Post-translationally, phosphorylated by MTOR in response to mitogenic stimulation, leading to its activation.

The protein localises to the cytoplasm. Its subcellular location is the cytoskeleton. It is found in the microtubule organizing center. The protein resides in the centrosome. It localises to the chromosome. The protein localises to the centromere. Its subcellular location is the kinetochore. It is found in the nucleus speckle. The protein resides in the cilium basal body. It localises to the spindle. The catalysed reaction is L-seryl-[protein] + ATP = O-phospho-L-seryl-[protein] + ADP + H(+). It carries out the reaction L-threonyl-[protein] + ATP = O-phospho-L-threonyl-[protein] + ADP + H(+). Casein kinases are operationally defined by their preferential utilization of acidic proteins such as caseins as substrates. It can phosphorylate a large number of proteins. Participates in Wnt signaling. Phosphorylates CTNNB1 at 'Ser-45'. May phosphorylate PER1 and PER2. May play a role in segregating chromosomes during mitosis. May play a role in keratin cytoskeleton disassembly and thereby, it may regulate epithelial cell migration. Acts as a positive regulator of mTORC1 and mTORC2 signaling in response to nutrients by mediating phosphorylation of DEPTOR inhibitor. Acts as an inhibitor of NLRP3 inflammasome assembly by mediating phosphorylation of NLRP3. In Sus scrofa (Pig), this protein is Casein kinase I isoform alpha (CSNK1A1).